Reading from the N-terminus, the 250-residue chain is 4-hydroxy-tetrahydrodipicolinate reductase (250 aa).

NAD(+)-binding positions include 10–15 (GAKGRI), 78–80 (GTT), and 105–108 (APNF). Catalysis depends on histidine 135, which acts as the Proton donor/acceptor. Histidine 136 lines the (S)-2,3,4,5-tetrahydrodipicolinate pocket. Catalysis depends on lysine 139, which acts as the Proton donor. Residue 145-146 (GT) participates in (S)-2,3,4,5-tetrahydrodipicolinate binding.

This sequence belongs to the DapB family.

The protein resides in the cytoplasm. It catalyses the reaction (S)-2,3,4,5-tetrahydrodipicolinate + NAD(+) + H2O = (2S,4S)-4-hydroxy-2,3,4,5-tetrahydrodipicolinate + NADH + H(+). It carries out the reaction (S)-2,3,4,5-tetrahydrodipicolinate + NADP(+) + H2O = (2S,4S)-4-hydroxy-2,3,4,5-tetrahydrodipicolinate + NADPH + H(+). It participates in amino-acid biosynthesis; L-lysine biosynthesis via DAP pathway; (S)-tetrahydrodipicolinate from L-aspartate: step 4/4. Catalyzes the conversion of 4-hydroxy-tetrahydrodipicolinate (HTPA) to tetrahydrodipicolinate. The protein is 4-hydroxy-tetrahydrodipicolinate reductase of Streptomyces coelicolor (strain ATCC BAA-471 / A3(2) / M145).